A 471-amino-acid polypeptide reads, in one-letter code: UDP-N-acetylmuramate--L-alanine ligase (471 aa).

114 to 120 (GTHGKTT) contacts ATP.

This sequence belongs to the MurCDEF family.

Its subcellular location is the cytoplasm. It catalyses the reaction UDP-N-acetyl-alpha-D-muramate + L-alanine + ATP = UDP-N-acetyl-alpha-D-muramoyl-L-alanine + ADP + phosphate + H(+). It participates in cell wall biogenesis; peptidoglycan biosynthesis. Its function is as follows. Cell wall formation. The polypeptide is UDP-N-acetylmuramate--L-alanine ligase (Allorhizobium ampelinum (strain ATCC BAA-846 / DSM 112012 / S4) (Agrobacterium vitis (strain S4))).